The sequence spans 725 residues: A-type inclusion protein A25 (725 aa).

2 coiled-coil regions span residues 418 to 521 (GNSG…RNGK) and 547 to 719 (EIDK…NAET). Tandem repeats lie at residues 609–635 (VRRELEEERRRVRDLESRLDECTRNQE), 636–663 (DTQEVDALRSRIRELENKLTDCIESGGG), 664–687 (NLTEISRLQSKISDLERQLSECRE), and 699–725 (ISDLERQLNDCRRNNETNAETERDATS). Positions 609 to 718 (VRRELEEERR…CRRNNETNAE (110 aa)) are 4 X approximate tandem repeats.

This sequence belongs to the poxviridae A25 protein family. Interacts (via N-terminus) with protein A26.

Its subcellular location is the virion. Structural protein that forms a matrix surrounding the mature virion (MV) through interaction with protein A26. Presence of protein A25 in the virion structurally prevents direct virus-cell fusion mechanism. This is A-type inclusion protein A25 from Vaccinia virus (strain Western Reserve) (VACV).